Consider the following 526-residue polypeptide: 3-hydroxy-3-methylglutaryl-coenzyme A reductase 2 (526 aa).

Catalysis depends on charge relay system residues Glu-193, Lys-325, and Asp-401. The active-site Proton donor is His-499. The segment at 503–526 is disordered; the sequence is NRKTEAPAPQADTISMTHNLPHSD. Over residues 514 to 526 the composition is skewed to polar residues; the sequence is DTISMTHNLPHSD.

This sequence belongs to the HMG-CoA reductase family.

It catalyses the reaction (R)-mevalonate + 2 NADP(+) + CoA = (3S)-3-hydroxy-3-methylglutaryl-CoA + 2 NADPH + 2 H(+). Its pathway is metabolic intermediate biosynthesis; (R)-mevalonate biosynthesis; (R)-mevalonate from acetyl-CoA: step 3/3. Its function is as follows. This transmembrane glycoprotein is involved in the control of cholesterol biosynthesis. It is the rate-limiting enzyme of the sterol biosynthesis. The chain is 3-hydroxy-3-methylglutaryl-coenzyme A reductase 2 (hmgB) from Dictyostelium discoideum (Social amoeba).